The chain runs to 212 residues: Uridine kinase (212 aa).

ATP is bound at residue 12-19 (GGSGGGKT).

Belongs to the uridine kinase family.

It is found in the cytoplasm. The catalysed reaction is uridine + ATP = UMP + ADP + H(+). It catalyses the reaction cytidine + ATP = CMP + ADP + H(+). It functions in the pathway pyrimidine metabolism; CTP biosynthesis via salvage pathway; CTP from cytidine: step 1/3. Its pathway is pyrimidine metabolism; UMP biosynthesis via salvage pathway; UMP from uridine: step 1/1. This chain is Uridine kinase, found in Streptococcus pneumoniae serotype 19F (strain G54).